The sequence spans 61 residues: Ubiquinol-cytochrome c reductase complex assembly factor 6 (61 aa).

The Mitochondrial matrix portion of the chain corresponds to 1–9 (MPAGVSWGQ). Residues 10–32 (YLKFLGCALASMMAGSQAVHLYY) traverse the membrane as a helical segment. Residues 33–61 (KPLEDLRVYIEQEQHSTQVDPTAKPPESA) are Mitochondrial intermembrane-facing.

Belongs to the UQCC6 family. In terms of assembly, interacts with sloth1; the interaction stabilizes both components. Expressed in the brain.

The protein resides in the mitochondrion inner membrane. It is found in the mitochondrion. Required for the assembly and stability of the mitochondrial ubiquinol-cytochrome c reductase complex (complex III (CIII) or cytochrome b-c1 complex), a multisubunit transmembrane complex that is part of the mitochondrial electron transport chain (ETC) which drives oxidative phosphorylation. In Drosophila melanogaster (Fruit fly), this protein is Ubiquinol-cytochrome c reductase complex assembly factor 6.